Here is an 832-residue protein sequence, read N- to C-terminus: Translation initiation factor IF-2 (832 aa).

The disordered stretch occupies residues 1–249 (MSDDNDKPRT…GGGSSAPREK (249 aa)). Residues 53-71 (TPAPAPEPAPEPAPAPAPA) show a composition bias toward pro residues. A compositionally biased stretch (basic and acidic residues) spans 89–144 (PQERVARLQREAEEERLKLAEDARKRDDQKAKQNADDEKKRQEENKKAEEEAEKQA). A compositionally biased stretch (low complexity) spans 145 to 156 (AAEAEAAAAAEA). Residues 180-200 (PEPKRPEKKKEEKKPARGGAK) are compositionally biased toward basic and acidic residues. The region spanning 333-503 (PRPPVVTIMG…ELQAELLELK (171 aa)) is the tr-type G domain. The segment at 342-349 (GHVDHGKT) is G1. 342 to 349 (GHVDHGKT) serves as a coordination point for GTP. Residues 367–371 (GITQH) form a G2 region. A G3 region spans residues 389 to 392 (DTPG). Residues 389-393 (DTPGH) and 443-446 (NKCD) each bind GTP. The tract at residues 443 to 446 (NKCD) is G4. The G5 stretch occupies residues 479-481 (SAT).

This sequence belongs to the TRAFAC class translation factor GTPase superfamily. Classic translation factor GTPase family. IF-2 subfamily.

It is found in the cytoplasm. In terms of biological role, one of the essential components for the initiation of protein synthesis. Protects formylmethionyl-tRNA from spontaneous hydrolysis and promotes its binding to the 30S ribosomal subunits. Also involved in the hydrolysis of GTP during the formation of the 70S ribosomal complex. In Erythrobacter litoralis (strain HTCC2594), this protein is Translation initiation factor IF-2.